A 211-amino-acid polypeptide reads, in one-letter code: Protein-L-isoaspartate O-methyltransferase 1 (211 aa).

Serine 62 is a catalytic residue.

The protein belongs to the methyltransferase superfamily. L-isoaspartyl/D-aspartyl protein methyltransferase family.

The protein resides in the cytoplasm. It carries out the reaction [protein]-L-isoaspartate + S-adenosyl-L-methionine = [protein]-L-isoaspartate alpha-methyl ester + S-adenosyl-L-homocysteine. Its function is as follows. Catalyzes the methyl esterification of L-isoaspartyl residues in peptides and proteins that result from spontaneous decomposition of normal L-aspartyl and L-asparaginyl residues. It plays a role in the repair and/or degradation of damaged proteins. The protein is Protein-L-isoaspartate O-methyltransferase 1 of Shewanella sediminis (strain HAW-EB3).